The primary structure comprises 478 residues: GTPase Obg (478 aa).

The Obg domain occupies threonine 2–valine 159. The segment at histidine 61–leucine 87 is disordered. An OBG-type G domain is found at alanine 160–alanine 330. GTP is bound by residues glycine 166–serine 173, phenylalanine 191–valine 195, aspartate 212–glycine 215, asparagine 282–aspartate 285, and serine 311–isoleucine 313. Serine 173 and threonine 193 together coordinate Mg(2+). Residues proline 348 to proline 430 enclose the OCT domain. Residues alanine 436 to phenylalanine 478 form a disordered region. Over residues leucine 439–alanine 468 the composition is skewed to basic and acidic residues. Acidic residues predominate over residues glutamate 469–phenylalanine 478.

Belongs to the TRAFAC class OBG-HflX-like GTPase superfamily. OBG GTPase family. In terms of assembly, monomer. Mg(2+) serves as cofactor.

The protein resides in the cytoplasm. Its function is as follows. An essential GTPase which binds GTP, GDP and possibly (p)ppGpp with moderate affinity, with high nucleotide exchange rates and a fairly low GTP hydrolysis rate. Plays a role in control of the cell cycle, stress response, ribosome biogenesis and in those bacteria that undergo differentiation, in morphogenesis control. The chain is GTPase Obg from Streptomyces griseus subsp. griseus (strain JCM 4626 / CBS 651.72 / NBRC 13350 / KCC S-0626 / ISP 5235).